We begin with the raw amino-acid sequence, 238 residues long: Protein odd-skipped-related 2 (238 aa).

Residues 105 to 126 (EDPPVTGQSRLSPERRPARGRL) are disordered. C2H2-type zinc fingers lie at residues 134 to 156 (FICRFCGRHFTKSYNLLIHERTH), 162 to 184 (YTCDICHKAFRRQDHLRDHRYIH), and 190 to 212 (FKCQECGKGFCQSRTLAVHKTLH).

It belongs to the Odd C2H2-type zinc-finger protein family. In terms of tissue distribution, at the 8-somite stage, expressed in the pronephros, with weak generalized expression elsewhere. At 24 hpf, expressed in the kidney tubules and the anterior duct, and also in the gut. At 60 hpf, expressed in the tubules and the pectoral fin buds.

The protein resides in the nucleus. Its function is as follows. Transcriptional repressor. Required for pronephric kidney development. The protein is Protein odd-skipped-related 2 of Danio rerio (Zebrafish).